The following is a 187-amino-acid chain: Lysozyme C-like protein DDB_G0288143 (187 aa).

A signal peptide spans 1 to 23; the sequence is MKVSNLISTITIASALCLSLTNA. Intrachain disulfides connect Cys50–Cys125, Cys74–Cys82, and Cys78–Cys97. Glu55 is a catalytic residue. Residues 133-187 form a disordered region; sequence QHGSHSSTSRDSSSSSSRDSTGTGYSSSGSGTSGSGSNSGQTGHFIPGQSGHGLN. Over residues 136 to 175 the composition is skewed to low complexity; it reads SHSSTSRDSSSSSSRDSTGTGYSSSGSGTSGSGSNSGQTG.

Belongs to the glycosyl hydrolase 22 family.

This chain is Lysozyme C-like protein DDB_G0288143, found in Dictyostelium discoideum (Social amoeba).